Consider the following 352-residue polypeptide: Ion-translocating oxidoreductase complex subunit D (352 aa).

Transmembrane regions (helical) follow at residues 20-40, 42-62, 89-109, and 123-143; these read IMLL…WFFG, GTLV…ALVL, IPPL…VIIA, and PAMI…TSWL. At Thr187 the chain carries FMN phosphoryl threonine. Helical transmembrane passes span 214–234, 242–262, 267–287, 301–321, and 322–342; these read ILAG…GVWL, WHIP…GWLF, LAAP…FFIL, LIFG…GGYP, and DGVA…DYYT.

Belongs to the NqrB/RnfD family. The complex is composed of six subunits: RsxA, RsxB, RsxC, RsxD, RsxE and RsxG. FMN serves as cofactor.

Its subcellular location is the cell inner membrane. In terms of biological role, part of a membrane-bound complex that couples electron transfer with translocation of ions across the membrane. Required to maintain the reduced state of SoxR. In Escherichia coli O127:H6 (strain E2348/69 / EPEC), this protein is Ion-translocating oxidoreductase complex subunit D.